The following is a 432-amino-acid chain: UDP-glucosyltransferase B1 (432 aa).

This sequence belongs to the UDP-glycosyltransferase family.

It carries out the reaction (9Z)-17-hydroxyoctadec-9-enoate 17-O-beta-D-glucoside + UDP-alpha-D-glucose = (9Z)-17-hydroxyoctadec-9-enoate 17-O-sophoroside + UDP + H(+). Catalyzes the second glycosylation step of sophorolipid biosynthesis, the further glucosylation of the previoulsy formed glucolipid to give rise to an acidic sophorolipid. The polypeptide is UDP-glucosyltransferase B1 (Starmerella bombicola (Yeast)).